The chain runs to 624 residues: MKGQETRGFQSEVKQLLHLMIHSLYSNKEIFLRELISNASDAADKLRFRSLSNPDLYEGDGELRVRVSFDKDKRTLTISDNGVGMTRDEVIDHLGTIAKSGTKSFLESLGSDQAKDSQLIGQFGVGFYSAFIVADKVTVRTRAAGEKPENGVFWESAGEGEYTVADITKEDRGTEITLHLREGEDEFLDDWRVRSIISKYSDHIALPVEIEKCEEKDGETVISWEKINKAQALWTRNKSEITDEEYKEFYKHIAHDFNDPLTWSHNRVEGKQEYTSLLYIPSQAPWDMWNRDHKHGLKLYVQRVFIMDDAEQFMPNYLRFVRGLIDSSDLSLNVSREILQDSTVTRNLRNALTKRVLQMLEKLAKDDAEKYQTFWQQFGLVLKEGPAEDFANQEAIAKLLRFASTHTDSSAQTVSLEDYVSRMKEGQEKIYYITADSYAAAKSSPHLELLRKKGIEVLLLSDRIDEWMMNYLTEFDGKPFQSVSKVDESLEKLADEVDESAKEAEKALTPFIDRVKALLGERVKDVRLTHRLTDTPAIVSTDADEMSTQMAKLFAAAGQKVPEVKYIFELNPDHVLVKRAADTEDEAKFSEWVELLLDQALLAERGTLEDPNLFIRRMNQLLVS.

An a; substrate-binding region spans residues 1 to 336 (MKGQETRGFQ…SSDLSLNVSR (336 aa)). Residues 337 to 552 (EILQDSTVTR…ADEMSTQMAK (216 aa)) are b. A c region spans residues 553–624 (LFAAAGQKVP…IRRMNQLLVS (72 aa)).

This sequence belongs to the heat shock protein 90 family. As to quaternary structure, homodimer.

Its subcellular location is the cytoplasm. Its function is as follows. Molecular chaperone. Has ATPase activity. This chain is Chaperone protein HtpG, found in Shigella dysenteriae serotype 1 (strain Sd197).